Reading from the N-terminus, the 373-residue chain is Glutamate 5-kinase (373 aa).

Residue K15 participates in ATP binding. Positions 55, 142, and 154 each coordinate substrate. Residues 174–175 (TD) and 216–222 (TGGMVTK) contribute to the ATP site. One can recognise a PUA domain in the interval 281-359 (SGKIIVDDGA…GEIEAILGYK (79 aa)).

The protein belongs to the glutamate 5-kinase family.

It localises to the cytoplasm. It carries out the reaction L-glutamate + ATP = L-glutamyl 5-phosphate + ADP. It functions in the pathway amino-acid biosynthesis; L-proline biosynthesis; L-glutamate 5-semialdehyde from L-glutamate: step 1/2. Its function is as follows. Catalyzes the transfer of a phosphate group to glutamate to form L-glutamate 5-phosphate. The polypeptide is Glutamate 5-kinase (Geobacter sulfurreducens (strain ATCC 51573 / DSM 12127 / PCA)).